The sequence spans 224 residues: Small ribosomal subunit protein uS5 (224 aa).

The interval M1–K38 is disordered. Basic and acidic residues predominate over residues E13–K38. The S5 DRBM domain maps to Y41–V104.

It belongs to the universal ribosomal protein uS5 family. As to quaternary structure, part of the 30S ribosomal subunit. Contacts proteins S4 and S8.

Its function is as follows. With S4 and S12 plays an important role in translational accuracy. In terms of biological role, located at the back of the 30S subunit body where it stabilizes the conformation of the head with respect to the body. The chain is Small ribosomal subunit protein uS5 from Mycobacterium ulcerans (strain Agy99).